The primary structure comprises 433 residues: 3-phosphoshikimate 1-carboxyvinyltransferase (433 aa).

The 3-phosphoshikimate site is built by Lys-15, Ser-16, and Arg-20. Phosphoenolpyruvate is bound at residue Lys-15. Gly-96 and Arg-124 together coordinate phosphoenolpyruvate. 3-phosphoshikimate-binding residues include Ser-169, Gln-171, Ser-195, Asp-318, and Lys-345. Gln-171 provides a ligand contact to phosphoenolpyruvate. Asp-318 (proton acceptor) is an active-site residue. Phosphoenolpyruvate-binding residues include Arg-349 and Arg-393.

This sequence belongs to the EPSP synthase family. In terms of assembly, monomer.

Its subcellular location is the cytoplasm. The catalysed reaction is 3-phosphoshikimate + phosphoenolpyruvate = 5-O-(1-carboxyvinyl)-3-phosphoshikimate + phosphate. It functions in the pathway metabolic intermediate biosynthesis; chorismate biosynthesis; chorismate from D-erythrose 4-phosphate and phosphoenolpyruvate: step 6/7. Its function is as follows. Catalyzes the transfer of the enolpyruvyl moiety of phosphoenolpyruvate (PEP) to the 5-hydroxyl of shikimate-3-phosphate (S3P) to produce enolpyruvyl shikimate-3-phosphate and inorganic phosphate. In Pelodictyon phaeoclathratiforme (strain DSM 5477 / BU-1), this protein is 3-phosphoshikimate 1-carboxyvinyltransferase.